The primary structure comprises 205 residues: Thymidylate kinase (205 aa).

10–17 (GIDGAGKS) contributes to the ATP binding site.

The protein belongs to the thymidylate kinase family.

It carries out the reaction dTMP + ATP = dTDP + ADP. Phosphorylation of dTMP to form dTDP in both de novo and salvage pathways of dTTP synthesis. This Ralstonia pickettii (strain 12J) protein is Thymidylate kinase.